A 125-amino-acid chain; its full sequence is Small ribosomal subunit protein uS12 (125 aa).

Asp-89 is subject to 3-methylthioaspartic acid.

This sequence belongs to the universal ribosomal protein uS12 family. In terms of assembly, part of the 30S ribosomal subunit. Contacts proteins S8 and S17. May interact with IF1 in the 30S initiation complex.

Functionally, with S4 and S5 plays an important role in translational accuracy. In terms of biological role, interacts with and stabilizes bases of the 16S rRNA that are involved in tRNA selection in the A site and with the mRNA backbone. Located at the interface of the 30S and 50S subunits, it traverses the body of the 30S subunit contacting proteins on the other side and probably holding the rRNA structure together. The combined cluster of proteins S8, S12 and S17 appears to hold together the shoulder and platform of the 30S subunit. This is Small ribosomal subunit protein uS12 from Ralstonia nicotianae (strain ATCC BAA-1114 / GMI1000) (Ralstonia solanacearum).